The following is a 298-amino-acid chain: Acetylglutamate kinase (298 aa).

Residues 69–70, R91, and N196 each bind substrate; that span reads GG.

The protein belongs to the acetylglutamate kinase family. ArgB subfamily.

Its subcellular location is the cytoplasm. It carries out the reaction N-acetyl-L-glutamate + ATP = N-acetyl-L-glutamyl 5-phosphate + ADP. It participates in amino-acid biosynthesis; L-arginine biosynthesis; N(2)-acetyl-L-ornithine from L-glutamate: step 2/4. Catalyzes the ATP-dependent phosphorylation of N-acetyl-L-glutamate. The chain is Acetylglutamate kinase from Rhodopseudomonas palustris (strain TIE-1).